We begin with the raw amino-acid sequence, 418 residues long: Actin-related protein 3 (418 aa).

N-acetylmethionine is present on methionine 1.

Belongs to the actin family. ARP3 subfamily. In terms of assembly, component of the Arp2/3 complex composed of arpB/Arp2, arpC/Arp3, arcA/p41-arc, arcB/p34-arc, arcC/p21-arc, arcD/p20-arc and arcE/p16-arc. Interacts with carmil (via the region between the LRR domain and COOH-terminal proline-rich domain); carmil is required for Arp2/3-dependent actin nucleation. Arp2/3 complex, MyoB, MyoC, and the alpha and beta subunits of capping protein all form a larger complex with carmil.

Its subcellular location is the cytoplasm. It is found in the cytoskeleton. The protein localises to the cytosol. It localises to the cell cortex. The protein resides in the cell projection. Its subcellular location is the pseudopodium. Its function is as follows. Functions as ATP-binding component of the Arp2/3 complex which is involved in regulation of actin polymerization and together with an activating nucleation-promoting factor (NPF) mediates the formation of branched actin networks. Seems to contact the pointed end of the daughter actin filament. The Arp2/3 complex is involved in organizing the actin system in cell motility and chemotaxis, in phagocytosis and macropinocytosis, at late steps of endosome processing, and in mitosis. In concert with a group of other proteins, the Arp2/3 complex plays a general role in the rapid activation and adaptation of the actin system to its multiple functions. The polypeptide is Actin-related protein 3 (arpC) (Dictyostelium discoideum (Social amoeba)).